Consider the following 591-residue polypeptide: Protein CBFA2T3 (591 aa).

The interval M1–Q105 is disordered. Positions M1–I381 are mediates localization to the nucleus. Pro residues predominate over residues S41–A52. Residues Q55–Q105 are compositionally biased toward polar residues. In terms of domain architecture, TAFH spans A112–E207. Disordered regions lie at residues L226–H291 and D386–P420. The span at E230–S256 shows a compositional bias: basic and acidic residues. Positions S263–L274 are enriched in polar residues. Positions N279 to Q290 are enriched in pro residues. The segment covering S394–P410 has biased composition (low complexity). Residues R433–L488 are a coiled coil. Zn(2+) contacts are provided by C501, C504, C512, C515, C521, C525, H533, and C537. Residues C501–C537 form an MYND-type zinc finger. The disordered stretch occupies residues S548–R591. Residues P560 to P585 show a composition bias toward low complexity.

The protein belongs to the CBFA2T family.

The protein localises to the nucleus. It is found in the nucleolus. Its subcellular location is the nucleoplasm. It localises to the golgi apparatus. Functions as a transcriptional repressor. Regulates the proliferation and the differentiation of erythroid progenitors. Plays a role in granulocyte differentiation. May also function as an A-kinase-anchoring protein. In Gallus gallus (Chicken), this protein is Protein CBFA2T3 (CBFA2T3).